The chain runs to 327 residues: Inactive peptidyl-prolyl cis-trans isomerase FKBP6 (327 aa).

Residues 54 to 143 enclose the PPIase FKBP-type domain; sequence DASVLVKYSG…LFEIELLDFL (90 aa). TPR repeat units follow at residues 171-204, 219-252, and 253-286; these read AATE…LRRR, LPVL…DQKN, and AKAL…QPFN.

Belongs to the FKBP6 family. As to quaternary structure, interacts (via TPR repeats) with HSP90. Interacts with HSP72/HSPA2 and CLTC. Interacts with GAPDH; leading to inhibit GAPDH catalytic activity. Detected in all tissues examined, with higher expression in testis, heart, skeletal muscle, liver, and kidney.

The protein localises to the cytoplasm. Its subcellular location is the nucleus. In terms of biological role, has an essential role in spermatogenesis. It is required to repress transposable elements and prevent their mobilization, which is essential for the germline integrity. Acts via the piRNA metabolic process, which mediates the repression of transposable elements during meiosis by forming complexes composed of piRNAs and Piwi proteins and govern the methylation and subsequent repression of transposons. Acts as a co-chaperone via its interaction with HSP90 and is required for the piRNA amplification process, the secondary piRNA biogenesis. May be required together with HSP90 in removal of 16 nucleotide ping-pong by-products from Piwi complexes, possibly facilitating turnover of Piwi complexes. This chain is Inactive peptidyl-prolyl cis-trans isomerase FKBP6 (FKBP6), found in Homo sapiens (Human).